Here is a 451-residue protein sequence, read N- to C-terminus: Cytochrome c biogenesis protein CcsB (451 aa).

3 consecutive transmembrane segments (helical) span residues L30–I50, T89–T109, and I175–A195.

This sequence belongs to the Ccs1/CcsB family. In terms of assembly, may interact with CcsA.

It localises to the cellular thylakoid membrane. Its function is as follows. Required during biogenesis of c-type cytochromes (cytochrome c6 and cytochrome f) at the step of heme attachment. This Crocosphaera subtropica (strain ATCC 51142 / BH68) (Cyanothece sp. (strain ATCC 51142)) protein is Cytochrome c biogenesis protein CcsB.